The following is a 296-amino-acid chain: 4-hydroxy-tetrahydrodipicolinate synthase (296 aa).

Position 49 (threonine 49) interacts with pyruvate. The Proton donor/acceptor role is filled by tyrosine 137. The Schiff-base intermediate with substrate role is filled by lysine 166. Isoleucine 208 contributes to the pyruvate binding site.

The protein belongs to the DapA family. As to quaternary structure, homotetramer; dimer of dimers.

It is found in the cytoplasm. It carries out the reaction L-aspartate 4-semialdehyde + pyruvate = (2S,4S)-4-hydroxy-2,3,4,5-tetrahydrodipicolinate + H2O + H(+). It functions in the pathway amino-acid biosynthesis; L-lysine biosynthesis via DAP pathway; (S)-tetrahydrodipicolinate from L-aspartate: step 3/4. Catalyzes the condensation of (S)-aspartate-beta-semialdehyde [(S)-ASA] and pyruvate to 4-hydroxy-tetrahydrodipicolinate (HTPA). This Pelodictyon phaeoclathratiforme (strain DSM 5477 / BU-1) protein is 4-hydroxy-tetrahydrodipicolinate synthase.